Reading from the N-terminus, the 170-residue chain is Nucleoside-triphosphatase THEP1 (170 aa).

ATP is bound by residues Gly-7–Thr-14 and Ile-98–Gly-105.

It belongs to the THEP1 NTPase family.

The enzyme catalyses a ribonucleoside 5'-triphosphate + H2O = a ribonucleoside 5'-diphosphate + phosphate + H(+). Functionally, has nucleotide phosphatase activity towards ATP, GTP, CTP, TTP and UTP. May hydrolyze nucleoside diphosphates with lower efficiency. This chain is Nucleoside-triphosphatase THEP1, found in Methanocaldococcus jannaschii (strain ATCC 43067 / DSM 2661 / JAL-1 / JCM 10045 / NBRC 100440) (Methanococcus jannaschii).